Here is a 436-residue protein sequence, read N- to C-terminus: Indole-3-acetyl-aspartic acid hydrolase (436 aa).

The protein belongs to the peptidase M20 family. Monomer.

It carries out the reaction (indol-3-yl)acetyl-L-aspartate + H2O = (indol-3-yl)acetate + L-aspartate. Functionally, hydrolyzes indole-3-acetyl-aspartate (IAA-Asp) to indole-3-acetic acid (IAA). Shows an exclusively high substrate specificity for IAA-Asp. This is Indole-3-acetyl-aspartic acid hydrolase from Enterobacter agglomerans (Erwinia herbicola).